The sequence spans 385 residues: 1-deoxy-D-xylulose 5-phosphate reductoisomerase (385 aa).

NADPH is bound by residues threonine 13, glycine 14, serine 15, isoleucine 16, asparagine 40, and asparagine 122. Lysine 123 serves as a coordination point for 1-deoxy-D-xylulose 5-phosphate. Glutamate 124 lines the NADPH pocket. A Mn(2+)-binding site is contributed by aspartate 148. 4 residues coordinate 1-deoxy-D-xylulose 5-phosphate: serine 149, glutamate 150, serine 177, and histidine 200. Glutamate 150 lines the Mn(2+) pocket. Residue glycine 206 participates in NADPH binding. Serine 213, asparagine 218, lysine 219, and glutamate 222 together coordinate 1-deoxy-D-xylulose 5-phosphate. Glutamate 222 is a Mn(2+) binding site.

This sequence belongs to the DXR family. The cofactor is Mg(2+). Requires Mn(2+) as cofactor.

The enzyme catalyses 2-C-methyl-D-erythritol 4-phosphate + NADP(+) = 1-deoxy-D-xylulose 5-phosphate + NADPH + H(+). It participates in isoprenoid biosynthesis; isopentenyl diphosphate biosynthesis via DXP pathway; isopentenyl diphosphate from 1-deoxy-D-xylulose 5-phosphate: step 1/6. Functionally, catalyzes the NADPH-dependent rearrangement and reduction of 1-deoxy-D-xylulose-5-phosphate (DXP) to 2-C-methyl-D-erythritol 4-phosphate (MEP). In Francisella tularensis subsp. novicida (strain U112), this protein is 1-deoxy-D-xylulose 5-phosphate reductoisomerase.